The chain runs to 117 residues: Eukaryotic translation initiation factor 4E-binding protein (117 aa).

A phosphothreonine mark is found at threonine 37 and threonine 46. Positions 54 to 60 match the YXXXXLphi motif; atypical motif; it reads YERAFMK. Serine 65 carries the phosphoserine modification. Position 70 is a phosphothreonine (threonine 70).

It belongs to the eIF4E-binding protein family. As to quaternary structure, hypophosphorylated Thor/4E-BP competes with eIF4G1 to interact with eIF4E1; insulin stimulated Akt1 or Tor phosphorylation of Thor/4E-BP causes dissociation of the complex allowing eIF4G1 to bind and consequent initiation of translation. Post-translationally, phosphorylation at Thr-37, Thr-46, Ser-65 and Thr-70, corresponding to the hyperphosphorylated form, impairs its ability to prevent the interaction between eIF4G1 and eIF4E1, without affecting its interaction with free eIF4E1. Phosphorylated in rtesponse to insulin. Phosphorylation at Thr-46 is regulated by Tor and constitutes the major phosphorylation event that regulates activity. In terms of tissue distribution, widely expressed.

Repressor of translation initiation that regulates eIF4E1 activity by preventing its assembly into the eIF4F complex. Hypophosphorylated form competes with eIF4G1 and strongly binds to eIF4E1, leading to repress translation. In contrast, hyperphosphorylated form dissociates from eIF4E1, allowing interaction between eIF4G1 and eIF4E1, leading to initiation of translation. Acts as a regulator of various biological processes, such as innate immunity, cell growth or synaptic transmission. Acts downstream of phosphoinositide-3-kinase (PI3K) to regulate cell growth. Extends lifespan upon dietary restriction by regulating the mitochondrial translation. Acts as a regulator of lifespan in response to cold by regulating the mitochondrial translation. Acts as a negative regulator of presynaptic release of neurotransmitter in motor neurons: Thor expression is induced in response to insulin signaling, leading to prevent of translation of complexin (cpx), a protein known to regulate the exocytosis of synaptic vesicles. Acts as a negative regulator of synaptic strength at the neuromuscular junction: Thor expression in response to acute fasting prevents translation, thereby suppressing retrograde synaptic enhancement. This Drosophila melanogaster (Fruit fly) protein is Eukaryotic translation initiation factor 4E-binding protein.